The chain runs to 214 residues: C-type lectin domain family 2 member L (214 aa).

Residues M1–T56 are disordered. Over residues R10–R31 the composition is skewed to pro residues. S32 is subject to Phosphoserine. The helical transmembrane segment at L69 to A89 threads the bilayer. One can recognise a C-type lectin domain in the interval Y107–S209. 2 disulfide bridges follow: C128–C208 and C187–C200.

Its subcellular location is the membrane. This is C-type lectin domain family 2 member L (CLEC2L) from Homo sapiens (Human).